The chain runs to 182 residues: Plasmolipin (182 aa).

The tract at residues 1–20 (MAEFPSKVNTRTSSPAQGGG) is disordered. Residues 1–35 (MAEFPSKVNTRTSSPAQGGGAVVSTLSPDLGFVRS) are Cytoplasmic-facing. Positions 7–16 (KVNTRTSSPA) are enriched in polar residues. The 135-residue stretch at 32 to 166 (FVRSSLGALM…SAFLSFQAWR (135 aa)) folds into the MARVEL domain. A helical transmembrane segment spans residues 36-56 (SLGALMLLQLVLGLLVWALIA). Over 57 to 68 (DTPYHLYPSYGW) the chain is Extracellular. Residues 69–89 (VMFVAVFLWLVTIIFFVLYLF) form a helical membrane-spanning segment. Residues 90–99 (QLHMKLYMVP) lie on the Cytoplasmic side of the membrane. The helical transmembrane segment at 100–120 (WPLVLMVFNVGATVLYITAFI) threads the bilayer. The Extracellular segment spans residues 121–141 (TCSASVELTSLKGSQPYNQRA). Residues 142–162 (AASFFSCLVMIAYGVSAFLSF) form a helical membrane-spanning segment. Residues 163 to 182 (QAWRGVGSNAATSQMAGGYA) lie on the Cytoplasmic side of the membrane.

Belongs to the MAL family. As to quaternary structure, forms oligomers. In terms of processing, phosphorylated.

The protein resides in the cell membrane. Its subcellular location is the myelin membrane. The protein localises to the apical cell membrane. Main component of the myelin sheath that plays an important role in myelin membrane biogenesis and myelination. Plays an essential function in apical endocytosis. Regulates epithelial development through the regulation of apical endocytosis. Part of the intracellular machinery that mediates basolateral-to-apical transport of ICAM-1, an essential adhesion receptor in epithelial cells, from the subapical compartment in hepatic epithelial cells. The polypeptide is Plasmolipin (PLLP) (Bos taurus (Bovine)).